A 553-amino-acid polypeptide reads, in one-letter code: Efflux pump mlcE (553 aa).

Residues Met1–Ser19 show a composition bias toward basic and acidic residues. The disordered stretch occupies residues Met1–Ser29. N-linked (GlcNAc...) asparagine glycosylation occurs at Asn21. The next 13 membrane-spanning stretches (helical) occupy residues Leu41–Val61, Val77–Gly96, Leu101–Leu121, Ala136–Ala156, Val164–Gly184, Cys196–Ile216, Leu245–Gly265, Ser273–Trp293, Leu319–Phe339, Val352–Ile372, Gly376–Val396, Ala440–Phe460, and Thr516–Trp536. Asn543 carries N-linked (GlcNAc...) asparagine glycosylation.

The protein belongs to the major facilitator superfamily. TCR/Tet family.

Its subcellular location is the membrane. Functionally, efflux pump; part of the gene cluster that mediates the biosynthesis of compactin, also known as mevastatin or ML-236B, and which acts as a potent competitive inhibitor of HMG-CoA reductase. This chain is Efflux pump mlcE, found in Penicillium citrinum.